A 263-amino-acid polypeptide reads, in one-letter code: S-adenosylmethionine decarboxylase proenzyme (263 aa).

Residue Ser113 is the Schiff-base intermediate with substrate; via pyruvic acid of the active site. Ser113 carries the pyruvic acid (Ser); by autocatalysis modification. Residue His118 is the Proton acceptor; for processing activity of the active site. The Proton donor; for catalytic activity role is filled by Cys141.

The protein belongs to the prokaryotic AdoMetDC family. Type 2 subfamily. As to quaternary structure, heterooctamer of four alpha and four beta chains arranged as a tetramer of alpha/beta heterodimers. It depends on pyruvate as a cofactor. In terms of processing, is synthesized initially as an inactive proenzyme. Formation of the active enzyme involves a self-maturation process in which the active site pyruvoyl group is generated from an internal serine residue via an autocatalytic post-translational modification. Two non-identical subunits are generated from the proenzyme in this reaction, and the pyruvate is formed at the N-terminus of the alpha chain, which is derived from the carboxyl end of the proenzyme. The post-translation cleavage follows an unusual pathway, termed non-hydrolytic serinolysis, in which the side chain hydroxyl group of the serine supplies its oxygen atom to form the C-terminus of the beta chain, while the remainder of the serine residue undergoes an oxidative deamination to produce ammonia and the pyruvoyl group blocking the N-terminus of the alpha chain.

The catalysed reaction is S-adenosyl-L-methionine + H(+) = S-adenosyl 3-(methylsulfanyl)propylamine + CO2. It participates in amine and polyamine biosynthesis; S-adenosylmethioninamine biosynthesis; S-adenosylmethioninamine from S-adenosyl-L-methionine: step 1/1. Functionally, catalyzes the decarboxylation of S-adenosylmethionine to S-adenosylmethioninamine (dcAdoMet), the propylamine donor required for the synthesis of the polyamines spermine and spermidine from the diamine putrescine. The sequence is that of S-adenosylmethionine decarboxylase proenzyme from Marinobacter nauticus (strain ATCC 700491 / DSM 11845 / VT8) (Marinobacter aquaeolei).